The sequence spans 497 residues: Bloodstream-specific protein 2 (497 aa).

The N-terminal stretch at 1–14 is a signal peptide; it reads MRAIFLVALALATM. Residues 15 to 124 enclose the Thioredoxin 1 domain; the sequence is RESTAESLKL…IIKYIKANVG (110 aa). N30 carries N-linked (GlcNAc...) asparagine glycosylation. Residues C48 and C51 are joined by a disulfide bond. N-linked (GlcNAc...) asparagine glycans are attached at residues N63, N85, N153, N154, N250, and N278. The region spanning 334 to 455 is the Thioredoxin 2 domain; it reads EPTIKSLPVP…VYEFVRKHVT (122 aa). Catalysis depends on nucleophile residues C378 and C381. C378 and C381 are disulfide-bonded. 6 N-linked (GlcNAc...) asparagine glycosylation sites follow: N413, N465, N476, N482, N485, and N488. Positions 461 to 497 are disordered; the sequence is EKPANVTEEKKSEEENKSSKSNESNDSNESNVDKQDL. The segment covering 467-480 has biased composition (basic and acidic residues); that stretch reads TEEKKSEEENKSSK. Positions 481–490 are enriched in low complexity; that stretch reads SNESNDSNES.

The protein belongs to the protein disulfide isomerase family.

This chain is Bloodstream-specific protein 2 (BS2), found in Trypanosoma brucei brucei.